The sequence spans 596 residues: Putative terpenoid synthase 5 (596 aa).

Residues Asp349, Asp353, Asn481, and Asp489 each contribute to the Mg(2+) site. A DDXXD motif motif is present at residues 349 to 353; it reads DDTCD.

This sequence belongs to the terpene synthase family. Tpsa subfamily. It depends on Mg(2+) as a cofactor. Mn(2+) is required as a cofactor.

It localises to the cytoplasm. The protein operates within secondary metabolite biosynthesis; terpenoid biosynthesis. The chain is Putative terpenoid synthase 5 (TPS05) from Arabidopsis thaliana (Mouse-ear cress).